A 277-amino-acid chain; its full sequence is General transcription factor IIF subunit 2 (277 aa).

Belongs to the TFIIF beta subunit family. As to quaternary structure, heterodimer of an alpha and a beta subunit.

It localises to the nucleus. In terms of biological role, TFIIF is a general transcription initiation factor that binds to RNA polymerase II and helps to recruit it to the initiation complex in collaboration with TFIIB. The chain is General transcription factor IIF subunit 2 (TfIIFbeta) from Drosophila melanogaster (Fruit fly).